Reading from the N-terminus, the 123-residue chain is Holo-[acyl-carrier-protein] synthase (123 aa).

Residues Asp-8 and Glu-60 each coordinate Mg(2+).

This sequence belongs to the P-Pant transferase superfamily. AcpS family. Mg(2+) serves as cofactor.

The protein resides in the cytoplasm. The enzyme catalyses apo-[ACP] + CoA = holo-[ACP] + adenosine 3',5'-bisphosphate + H(+). In terms of biological role, transfers the 4'-phosphopantetheine moiety from coenzyme A to a Ser of acyl-carrier-protein. The sequence is that of Holo-[acyl-carrier-protein] synthase from Ehrlichia ruminantium (strain Gardel).